Here is a 213-residue protein sequence, read N- to C-terminus: Ribonuclease T (213 aa).

Residues 28 to 202 enclose the Exonuclease domain; it reads VVVDVETGGF…YDTEQTARLF (175 aa). The Mg(2+) site is built by aspartate 31, glutamate 33, histidine 189, and aspartate 194. The active-site Proton donor/acceptor is the histidine 189.

It belongs to the RNase T family. As to quaternary structure, homodimer. Mg(2+) is required as a cofactor.

In terms of biological role, trims short 3' overhangs of a variety of RNA species, leaving a one or two nucleotide 3' overhang. Responsible for the end-turnover of tRNA: specifically removes the terminal AMP residue from uncharged tRNA (tRNA-C-C-A). Also appears to be involved in tRNA biosynthesis. The chain is Ribonuclease T from Xanthomonas axonopodis pv. citri (strain 306).